A 159-amino-acid polypeptide reads, in one-letter code: 2-C-methyl-D-erythritol 2,4-cyclodiphosphate synthase (159 aa).

The a divalent metal cation site is built by aspartate 10 and histidine 12. 4-CDP-2-C-methyl-D-erythritol 2-phosphate contacts are provided by residues 10-12 (DVH) and 36-37 (HS). Position 44 (histidine 44) interacts with a divalent metal cation. Residues 58–60 (DIG) and arginine 144 each bind 4-CDP-2-C-methyl-D-erythritol 2-phosphate.

It belongs to the IspF family. Homotrimer. A divalent metal cation serves as cofactor.

The enzyme catalyses 4-CDP-2-C-methyl-D-erythritol 2-phosphate = 2-C-methyl-D-erythritol 2,4-cyclic diphosphate + CMP. Its pathway is isoprenoid biosynthesis; isopentenyl diphosphate biosynthesis via DXP pathway; isopentenyl diphosphate from 1-deoxy-D-xylulose 5-phosphate: step 4/6. Involved in the biosynthesis of isopentenyl diphosphate (IPP) and dimethylallyl diphosphate (DMAPP), two major building blocks of isoprenoid compounds. Catalyzes the conversion of 4-diphosphocytidyl-2-C-methyl-D-erythritol 2-phosphate (CDP-ME2P) to 2-C-methyl-D-erythritol 2,4-cyclodiphosphate (ME-CPP) with a corresponding release of cytidine 5-monophosphate (CMP). The sequence is that of 2-C-methyl-D-erythritol 2,4-cyclodiphosphate synthase from Paraburkholderia phymatum (strain DSM 17167 / CIP 108236 / LMG 21445 / STM815) (Burkholderia phymatum).